The following is a 715-amino-acid chain: Glycine--tRNA ligase beta subunit (715 aa).

This sequence belongs to the class-II aminoacyl-tRNA synthetase family. Tetramer of two alpha and two beta subunits.

Its subcellular location is the cytoplasm. It carries out the reaction tRNA(Gly) + glycine + ATP = glycyl-tRNA(Gly) + AMP + diphosphate. This is Glycine--tRNA ligase beta subunit from Nitrosomonas eutropha (strain DSM 101675 / C91 / Nm57).